We begin with the raw amino-acid sequence, 605 residues long: Xylan O-acetyltransferase 7 (605 aa).

The Cytoplasmic segment spans residues 1–124 (MKKKKNGMGA…AKQPSPRRTP (124 aa)). A disordered region spans residues 86-126 (PCHLLPIQGQGQMQMQQRRKPPPAAAPVAAKQPSPRRTPGP). Residues 125-145 (GPLSFAGALLSLLVVATFLYI) traverse the membrane as a helical; Signal-anchor for type II membrane protein segment. Over 146–605 (NDHGNMMPPH…LYAHIVAHAA (460 aa)) the chain is Lumenal. Residues Asn-192 and Asn-218 are each glycosylated (N-linked (GlcNAc...) asparagine). Disulfide bonds link Cys-243–Cys-296, Cys-267–Cys-332, Cys-276–Cys-584, and Cys-499–Cys-580. The GDS motif signature appears at 319-321 (GDS). Catalysis depends on Ser-321, which acts as the Nucleophile. Asn-351, Asn-363, Asn-471, and Asn-508 each carry an N-linked (GlcNAc...) asparagine glycan. The active-site Proton donor is the Asp-579. The DXXH motif signature appears at 579–582 (DCIH). Residue His-582 is the Proton acceptor of the active site.

The protein belongs to the PC-esterase family. TBL subfamily. In terms of tissue distribution, expressed in roots, leaves and stems.

The protein localises to the golgi apparatus membrane. Functionally, xylan acetyltransferase required for 2-O- and 3-O-monoacetylation of xylosyl residues in xylan. Catalyzes the 2-O-acetylation of xylan, followed by nonenzymatic acetyl migration to the O-3 position, resulting in products that are monoacetylated at both O-2 and O-3 positions. This is Xylan O-acetyltransferase 7 from Oryza sativa subsp. japonica (Rice).